The chain runs to 201 residues: Casparian strip membrane protein 4 (201 aa).

The disordered stretch occupies residues 1-23; the sequence is MEGKAAVTTSTEHGDGEASRTAA. Topologically, residues 1–41 are cytoplasmic; that stretch reads MEGKAAVTTSTEHGDGEASRTAARTVVSGSSRGGAASRALS. The helical transmembrane segment at 42 to 62 threads the bilayer; the sequence is VADLILRVVAVVAIVDSAIAM. Topologically, residues 63–87 are extracellular; that stretch reads GTTNQTLPFFTQFLRFKAQYSDLPT. Asn66 carries an N-linked (GlcNAc...) asparagine glycan. Residues 88-108 traverse the membrane as a helical segment; that stretch reads LTLFVVANSAVTAYLVLSIPL. The Cytoplasmic segment spans residues 109–122; sequence SVVHIIRSRASYSR. Residues 123–143 form a helical membrane-spanning segment; it reads LVLIFLDSVMLALVAAVASAS. Over 144–172 the chain is Extracellular; it reads AAIVYLAHKGNVRANWFAVCQQFDSFCER. Residues 173-193 form a helical membrane-spanning segment; it reads ISGPLIGSFAAMAVLLLLVLL. The Cytoplasmic portion of the chain corresponds to 194-201; the sequence is SAAALARR.

It belongs to the Casparian strip membrane proteins (CASP) family. As to quaternary structure, homodimer and heterodimers.

The protein resides in the cell membrane. Functionally, regulates membrane-cell wall junctions and localized cell wall deposition. Required for establishment of the Casparian strip membrane domain (CSD) and the subsequent formation of Casparian strips, a cell wall modification of the root endodermis that determines an apoplastic barrier between the intraorganismal apoplasm and the extraorganismal apoplasm and prevents lateral diffusion. This is Casparian strip membrane protein 4 from Oryza sativa subsp. japonica (Rice).